Consider the following 134-residue polypeptide: ATP synthase epsilon chain (134 aa).

It belongs to the ATPase epsilon chain family. In terms of assembly, F-type ATPases have 2 components, CF(1) - the catalytic core - and CF(0) - the membrane proton channel. CF(1) has five subunits: alpha(3), beta(3), gamma(1), delta(1), epsilon(1). CF(0) has three main subunits: a, b and c.

It is found in the cellular thylakoid membrane. Functionally, produces ATP from ADP in the presence of a proton gradient across the membrane. This chain is ATP synthase epsilon chain, found in Prochlorococcus marinus (strain MIT 9515).